A 254-amino-acid chain; its full sequence is Ubiquinone biosynthesis O-methyltransferase (254 aa).

S-adenosyl-L-methionine contacts are provided by Arg-47, Gly-76, Asp-97, and Leu-141.

It belongs to the methyltransferase superfamily. UbiG/COQ3 family.

It carries out the reaction a 3-demethylubiquinol + S-adenosyl-L-methionine = a ubiquinol + S-adenosyl-L-homocysteine + H(+). The catalysed reaction is a 3-(all-trans-polyprenyl)benzene-1,2-diol + S-adenosyl-L-methionine = a 2-methoxy-6-(all-trans-polyprenyl)phenol + S-adenosyl-L-homocysteine + H(+). Its pathway is cofactor biosynthesis; ubiquinone biosynthesis. O-methyltransferase that catalyzes the 2 O-methylation steps in the ubiquinone biosynthetic pathway. This chain is Ubiquinone biosynthesis O-methyltransferase, found in Maricaulis maris (strain MCS10) (Caulobacter maris).